A 446-amino-acid polypeptide reads, in one-letter code: Hepatocyte nuclear factor 4-beta (446 aa).

Positions 47 to 122 form a DNA-binding region, nuclear receptor; the sequence is NSFCAICGDR…AGMKKEAVQN (76 aa). NR C4-type zinc fingers lie at residues 50-70 and 86-110; these read CAICGDRATGKHYGASSCDGC and CRFSRQCIVDKDKRNQCRYCRLRKC. Residues 137 to 366 enclose the NR LBD domain; that stretch reads NGSLSINVLT…SLLQELLLGG (230 aa).

Belongs to the nuclear hormone receptor family. NR2 subfamily. Homodimerization is required for HNF4-alpha to bind to its recognition site. As to expression, expressed in liver, kidney, stomach, intestine, lung, ovary, and testis. Not expressed in fat, muscle and brain.

The protein localises to the nucleus. Its function is as follows. Transcription factor; binds and activates the promoter for the HNF1-alpha gene. Seems to have a lower DNA binding activity than HNF4-alpha and is a weaker transactivator than the alpha isoform. In Xenopus laevis (African clawed frog), this protein is Hepatocyte nuclear factor 4-beta (hnf4b).